The primary structure comprises 328 residues: Biotin synthase (328 aa).

The 230-residue stretch at 43–272 (NVVQKASLLS…KSTVRLSAGR (230 aa)) folds into the Radical SAM core domain. 3 residues coordinate [4Fe-4S] cluster: Cys-58, Cys-62, and Cys-65. The [2Fe-2S] cluster site is built by Cys-103, Cys-135, Cys-195, and Arg-267.

Belongs to the radical SAM superfamily. Biotin synthase family. As to quaternary structure, homodimer. [4Fe-4S] cluster serves as cofactor. It depends on [2Fe-2S] cluster as a cofactor.

The catalysed reaction is (4R,5S)-dethiobiotin + (sulfur carrier)-SH + 2 reduced [2Fe-2S]-[ferredoxin] + 2 S-adenosyl-L-methionine = (sulfur carrier)-H + biotin + 2 5'-deoxyadenosine + 2 L-methionine + 2 oxidized [2Fe-2S]-[ferredoxin]. The protein operates within cofactor biosynthesis; biotin biosynthesis; biotin from 7,8-diaminononanoate: step 2/2. Its function is as follows. Catalyzes the conversion of dethiobiotin (DTB) to biotin by the insertion of a sulfur atom into dethiobiotin via a radical-based mechanism. The protein is Biotin synthase of Allorhizobium ampelinum (strain ATCC BAA-846 / DSM 112012 / S4) (Agrobacterium vitis (strain S4)).